A 363-amino-acid polypeptide reads, in one-letter code: Cell division cycle-associated protein 3 (363 aa).

The segment covering 1–12 (MGSAESKAQVTP) has biased composition (polar residues). Disordered regions lie at residues 1-81 (MGSA…TPLR), 126-152 (VESQTAPPAGEHVNDHEVEPSVEKAET), 191-210 (MNDQEESPIAETMNDQEESP), and 231-363 (ENLN…HSNS). The tract at residues 93–152 (KQLSEVFVAEDSSTEGGPLGFTGPEATNLERQVVESQTAPPAGEHVNDHEVEPSVEKAET) is F-box-like. Residues 137–152 (HVNDHEVEPSVEKAET) show a composition bias toward basic and acidic residues. Residues 192 to 210 (NDQEESPIAETMNDQEESP) show a composition bias toward acidic residues. Over residues 259-285 (SVVSTESTQATGQQQKTRGKSPRSSGV) the composition is skewed to polar residues. Low complexity predominate over residues 296-308 (LLSSSSGRSPLRI). Polar residues predominate over residues 311–321 (EDNSPNTNTQH). The KEN box signature appears at 353–355 (KEN).

Interacts with wee1, when wee1 is phosphorylated at 'Ser-38'. Phosphorylated. Post-translationally, ubiquitinated and degraded by the APC/C-Cdh1 complex during G1 phase.

It is found in the cytoplasm. It localises to the cytosol. Its pathway is protein modification; protein ubiquitination. In terms of biological role, F-box-like protein which is required for entry into mitosis. Acts by participating in E3 ligase complexes that mediate the ubiquitination and degradation of WEE1 kinase at G2/M phase. In Xenopus laevis (African clawed frog), this protein is Cell division cycle-associated protein 3 (cdca3).